The primary structure comprises 136 residues: Histone H3 (136 aa).

Positions 1–43 are disordered; it reads MARTKQTARKSTGGKAPRKQLATKAARKSAPASGGVKKPHRYR. 2 positions are modified to N6,N6,N6-trimethyllysine; alternate: Lys-5 and Lys-10. 2 positions are modified to N6,N6-dimethyllysine; alternate: Lys-5 and Lys-10. N6-acetyllysine; alternate is present on residues Lys-5 and Lys-10. Lys-5 is modified (N6-methyllysine; alternate). Phosphoserine is present on Ser-11. Lys-15 and Lys-24 each carry N6-acetyllysine. Lys-28 carries the post-translational modification N6,N6,N6-trimethyllysine; alternate. Lys-28 is subject to N6,N6-dimethyllysine; alternate. Lys-28 is subject to N6-methyllysine; alternate. At Ser-29 the chain carries Phosphoserine. Lys-37 is subject to N6,N6,N6-trimethyllysine; alternate. Lys-37 is modified (N6,N6-dimethyllysine; alternate). Lys-37 carries the post-translational modification N6-methyllysine; alternate. Residue Lys-80 is modified to N6-methyllysine.

The protein belongs to the histone H3 family. As to quaternary structure, the nucleosome is a histone octamer containing two molecules each of H2A, H2B, H3 and H4 assembled in one H3-H4 heterotetramer and two H2A-H2B heterodimers. The octamer wraps approximately 147 bp of DNA. Interacts (via N-terminal tail mono-acetylated on Lys-15) with swsn-4 (via Bromo domain); the interaction is direct. Post-translationally, phosphorylated at Ser-11 and Ser-29 during M phase. Phosphorylation of Ser-11 requires air-2 but not air-1. Dephosphorylated by gsp-1 and/or gsp-2 during chromosome segregation. In terms of processing, acetylation is generally linked to gene activation. Methylation at Lys-5 is linked to gene activation and is absent from male inactive X chromosome chromatin. Methylation at Lys-10 is linked to gene repression and is enriched in male inactive X chromosome chromatin. Methylation at Lys-37 occurs on the entire length of autosomes during meiotic prophase. Trimethylation at Lys-10 and Lys-37 is specifically antagonized by jmjd-2. Dimethylation and trimethylation at Lys-28 occurs in all nuclei. The mes-2-mes-3-mes-6 complex may be responsible for Lys-28 methylation in most of the germline and in the early embryo.

The protein resides in the nucleus. The protein localises to the chromosome. Functionally, core component of nucleosome. Nucleosomes wrap and compact DNA into chromatin, limiting DNA accessibility to the cellular machineries which require DNA as a template. Histones thereby play a central role in transcription regulation, DNA repair, DNA replication and chromosomal stability. DNA accessibility is regulated via a complex set of post-translational modifications of histones, also called histone code, and nucleosome remodeling. This chain is Histone H3 (his-2), found in Caenorhabditis elegans.